We begin with the raw amino-acid sequence, 504 residues long: AMP phosphorylase 1 (504 aa).

AMP contacts are provided by residues G169, 195 to 200 (SRAITS), and T204. D257 serves as the catalytic Proton donor. Residues S265 and K289 each contribute to the AMP site.

This sequence belongs to the thymidine/pyrimidine-nucleoside phosphorylase family. Type 2 subfamily.

It catalyses the reaction AMP + phosphate = alpha-D-ribose 1,5-bisphosphate + adenine. It carries out the reaction CMP + phosphate = cytosine + alpha-D-ribose 1,5-bisphosphate. The catalysed reaction is UMP + phosphate = alpha-D-ribose 1,5-bisphosphate + uracil. Its function is as follows. Catalyzes the conversion of AMP and phosphate to adenine and ribose 1,5-bisphosphate (R15P). Exhibits phosphorylase activity toward CMP and UMP in addition to AMP. Functions in an archaeal AMP degradation pathway, together with R15P isomerase and RubisCO. The polypeptide is AMP phosphorylase 1 (Archaeoglobus fulgidus (strain ATCC 49558 / DSM 4304 / JCM 9628 / NBRC 100126 / VC-16)).